We begin with the raw amino-acid sequence, 2248 residues long: Zinc finger protein lin-13 (2248 aa).

A disordered region spans residues 1-189 (MDEFELFQQL…TYASQYSRPP (189 aa)). The span at 29-38 (QQANNNQSAP) shows a compositional bias: polar residues. The span at 54–92 (KQREEEEAQRLADFMQKDMKEPAVKRKRGSEEYKKDPLE) shows a compositional bias: basic and acidic residues. Residues 145-155 (ELDENYMEENE) are compositionally biased toward acidic residues. Positions 440–444 (PLVPV) match the Required for interaction with hpl-2 isoform a motif. Residues 503–525 (HTCIKCGKTFGTEFMLKHHAQSH) form a C2H2-type 1 zinc finger. Residues 603–665 (KTKKENRNIT…FTSSKQKKKR (63 aa)) are disordered. The segment covering 605–620 (KKENRNITDSNEKEFS) has biased composition (basic and acidic residues). C2H2-type zinc fingers lie at residues 812 to 837 (VRCI…SDVH), 959 to 982 (YSCS…TRFH), 1140 to 1162 (LMCY…MDDH), 1556 to 1578 (FKCQ…MRDH), 1601 to 1623 (WLCR…MAIH), and 1657 to 1680 (YSCG…SVAH). The segment covering 1859–1877 (PRSSLQTNGSSMGSVTTNG) has biased composition (polar residues). Positions 1859–1900 (PRSSLQTNGSSMGSVTTNGGRVVRPSPPNSMNVTLRRAPPQQ) are disordered.

In terms of assembly, interacts (via PLVPV motif) with chromobox protein homolog hpl-2 (via chromo (shadow subtype) domain); the interaction is direct and influences localization of hpl-2 to nuclear foci. In the L3 stage, expressed in syncytial hypodermal cell 7, body wall muscles, intestinal cells, distal tip cells and many neurons.

The protein resides in the nucleus. Involved in repression of vulval fate, possibly by a tumor suppressor protein Rb-mediated mechanism. May act in a common pathway with retinoblastoma-like protein homolog lin-35 and hpl-2 to influence the ER stress response in the intestine. Plays a role in recruiting chromobox protein homolog hpl-2 to specific chromatin sites. The chain is Zinc finger protein lin-13 (lin-13) from Caenorhabditis elegans.